Reading from the N-terminus, the 331-residue chain is Beta-ketoacyl-[acyl-carrier-protein] synthase III (331 aa).

Catalysis depends on residues Cys113 and His256. Positions 257-261 are ACP-binding; the sequence is QANKR. Residue Asn286 is part of the active site.

It belongs to the thiolase-like superfamily. FabH family. Homodimer.

Its subcellular location is the cytoplasm. The catalysed reaction is malonyl-[ACP] + acetyl-CoA + H(+) = 3-oxobutanoyl-[ACP] + CO2 + CoA. The protein operates within lipid metabolism; fatty acid biosynthesis. Catalyzes the condensation reaction of fatty acid synthesis by the addition to an acyl acceptor of two carbons from malonyl-ACP. Catalyzes the first condensation reaction which initiates fatty acid synthesis and may therefore play a role in governing the total rate of fatty acid production. Possesses both acetoacetyl-ACP synthase and acetyl transacylase activities. Its substrate specificity determines the biosynthesis of branched-chain and/or straight-chain of fatty acids. In Solibacter usitatus (strain Ellin6076), this protein is Beta-ketoacyl-[acyl-carrier-protein] synthase III.